The sequence spans 186 residues: Ribosome-recycling factor (186 aa).

This sequence belongs to the RRF family.

Its subcellular location is the cytoplasm. Responsible for the release of ribosomes from messenger RNA at the termination of protein biosynthesis. May increase the efficiency of translation by recycling ribosomes from one round of translation to another. This is Ribosome-recycling factor from Chlorobium phaeobacteroides (strain DSM 266 / SMG 266 / 2430).